The following is a 261-amino-acid chain: Endomucin (261 aa).

An N-terminal signal peptide occupies residues 1–18 (MELLQVTILFLLPSICSS). N19, N28, N98, and N104 each carry an N-linked (GlcNAc...) asparagine glycan. Over 19-190 (NSTGVLEAAN…TSATSRSYSS (172 aa)) the chain is Extracellular. Composition is skewed to polar residues over residues 118 to 134 (TLQS…SIKT) and 146 to 171 (ASPS…SQVI). Positions 118–183 (TLQSSKPKTE…EGGKNASTSA (66 aa)) are disordered. N-linked (GlcNAc...) asparagine glycans are attached at residues N164 and N178. The helical transmembrane segment at 191–211 (IILPVVIALIVITLSVFVLVG) threads the bilayer. The Cytoplasmic segment spans residues 212–261 (LYRMCWKADPGTPENGNDQPQSDKESVKLLTVKTISHESGEHSAQGKTKN). S237 bears the Phosphoserine mark.

Highly O-glycosylated. Sialic acid-rich glycoprotein. Expressed in heart, kidney and lung.

The protein resides in the cell membrane. Its subcellular location is the membrane. It localises to the secreted. Endothelial sialomucin, also called endomucin or mucin-like sialoglycoprotein, which interferes with the assembly of focal adhesion complexes and inhibits interaction between cells and the extracellular matrix. This Homo sapiens (Human) protein is Endomucin (EMCN).